We begin with the raw amino-acid sequence, 163 residues long: Steroid receptor-associated and regulated protein (163 aa).

Positions 1–16 (MAFSKDPRRTSLRDSS) are enriched in basic and acidic residues. Disordered regions lie at residues 1–30 (MAFS…CAPK) and 96–149 (ALDG…EKVK). Residues 17–26 (VEMSSGTQPS) are compositionally biased toward polar residues.

In terms of assembly, interacts with 14-3-3 proteins.

May regulate the transcriptional function of androgen and estrogen receptors. This Mus musculus (Mouse) protein is Steroid receptor-associated and regulated protein.